We begin with the raw amino-acid sequence, 83 residues long: Keratin-associated protein 21-2 (83 aa).

In terms of assembly, interacts with hair keratins.

Its function is as follows. In the hair cortex, hair keratin intermediate filaments are embedded in an interfilamentous matrix, consisting of hair keratin-associated proteins (KRTAP), which are essential for the formation of a rigid and resistant hair shaft through their extensive disulfide bond cross-linking with abundant cysteine residues of hair keratins. The matrix proteins include the high-sulfur and high-glycine-tyrosine keratins. The chain is Keratin-associated protein 21-2 (KRTAP21-2) from Homo sapiens (Human).